Reading from the N-terminus, the 581-residue chain is Amino-acid acetyltransferase, mitochondrial (581 aa).

Residues 401–558 form the N-acetyltransferase domain; sequence FTLHNLIEDE…RIVGSEAVNI (158 aa).

Belongs to the acetyltransferase family.

It is found in the mitochondrion. The enzyme catalyses L-glutamate + acetyl-CoA = N-acetyl-L-glutamate + CoA + H(+). The protein operates within amino-acid biosynthesis; L-arginine biosynthesis; N(2)-acetyl-L-ornithine from L-glutamate: step 1/4. N-acetylglutamate synthase involved in arginine biosynthesis. This Scheffersomyces stipitis (strain ATCC 58785 / CBS 6054 / NBRC 10063 / NRRL Y-11545) (Yeast) protein is Amino-acid acetyltransferase, mitochondrial (ARG2).